The sequence spans 306 residues: 2-phospho-L-lactate transferase (306 aa).

2 residues coordinate 7,8-didemethyl-8-hydroxy-5-deazariboflavin: aspartate 54 and arginine 93.

It belongs to the CofD family. As to quaternary structure, homodimer. Mg(2+) serves as cofactor.

The enzyme catalyses (2S)-lactyl-2-diphospho-5'-guanosine + 7,8-didemethyl-8-hydroxy-5-deazariboflavin = oxidized coenzyme F420-0 + GMP + H(+). Its pathway is cofactor biosynthesis; coenzyme F420 biosynthesis. Catalyzes the transfer of the 2-phospholactate moiety from (2S)-lactyl-2-diphospho-5'-guanosine to 7,8-didemethyl-8-hydroxy-5-deazariboflavin (FO) with the formation of oxidized coenzyme F420-0 and GMP. This chain is 2-phospho-L-lactate transferase, found in Methanothermobacter thermautotrophicus (strain ATCC 29096 / DSM 1053 / JCM 10044 / NBRC 100330 / Delta H) (Methanobacterium thermoautotrophicum).